The primary structure comprises 481 residues: Zinc metalloproteinase/disintegrin (481 aa).

An N-terminal signal peptide occupies residues 1 to 20 (MIQVLLVTICLAVFPYQGSS). Residues 21–190 (IILESGNVDD…KASQLYLTPE (170 aa)) constitute a propeptide that is removed on maturation. In terms of domain architecture, Peptidase M12B spans 197–392 (RYIKLAIVVD…DNPQCILNAP (196 aa)). Intrachain disulfides connect cysteine 308-cysteine 387, cysteine 349-cysteine 371, and cysteine 351-cysteine 354. Histidine 333 is a binding site for Zn(2+). Residue glutamate 334 is part of the active site. Zn(2+)-binding residues include histidine 337 and histidine 343. Positions 393–408 (LRTDTVSTPVSGNEFL) are excised as a propeptide. Residues 400-481 (TPVSGNEFLE…GDCPRNPFHA (82 aa)) form the Disintegrin domain. 6 disulfide bridges follow: cysteine 414–cysteine 429, cysteine 416–cysteine 424, cysteine 423–cysteine 446, cysteine 437–cysteine 443, cysteine 442–cysteine 467, and cysteine 455–cysteine 474. The short motif at 459–461 (RGD) is the Cell attachment site element.

This sequence belongs to the venom metalloproteinase (M12B) family. P-II subfamily. P-IIa sub-subfamily. As to quaternary structure, monomer. The cofactor is Zn(2+). Expressed by the venom gland.

The protein resides in the secreted. Functionally, impairs hemostasis in the envenomed animal. Its function is as follows. Disintegrin elegantin-2a-f: inhibits platelet aggregation induced by ADP, thrombin, platelet-activating factor and collagen. Acts by inhibiting fibrinogen interaction with platelet receptors GPIIb/GPIIIa (ITGA2B/ITGB3). In Protobothrops elegans (Elegant pitviper), this protein is Zinc metalloproteinase/disintegrin.